A 535-amino-acid polypeptide reads, in one-letter code: Probable deoxycholate-binding periplasmic protein YgiS (535 aa).

An N-terminal signal peptide occupies residues 1–20 (MYTRNLLWLVSLVSAAPLYA).

This sequence belongs to the bacterial solute-binding protein 5 family.

It localises to the periplasm. Its function is as follows. Probably part of a deoxycholate transport system. Its expression in the presence of deoxycholate in a ygiS deletion mutant increases intracellular deoxycholate levels and decreases cell growth; higher expression in the presence of deoxycholate inhibits cell growth completely. Bile acid detergents such as deoxycholate are important for host defense against bacterial growth in the gall bladder and duodenum. The chain is Probable deoxycholate-binding periplasmic protein YgiS (ygiS) from Escherichia coli (strain K12).